Consider the following 374-residue polypeptide: Secondary metabolism regulator laeA (374 aa).

Positions 1 to 75 (MFEMGPVGTR…NRNGSPSMSP (75 aa)) are disordered. Residues 23-40 (SYHSPTSSDRGRSRQNSD) show a composition bias toward polar residues. Position 207 is an S-methylmethionine (methionine 207).

The protein belongs to the methyltransferase superfamily. LaeA methyltransferase family. Component of the heterotrimeric velvet complex composed of laeA, veA and velB; VeA acting as a bridging protein between laeA and velB. Post-translationally, self-methylates at Met-207.

It localises to the nucleus. The catalysed reaction is L-methionyl-[protein] + S-adenosyl-L-methionine = S-methyl-L-methionyl-[protein] + S-adenosyl-L-homocysteine. Its function is as follows. Methyltransferase that performs automethylation at Met-207. No other methyl-accepting substrate has been identified yet. Component of the velvet transcription factor complex that acts as a global regulator for secondary metabolite gene expression. Controls the expression of the sterigmatocystin, penicillin, and lovastatin gene clusters. Controls light-dependent formation of the velB-vosA complex, veA protein modification, and is required for light-mediated inhibition of sexual development. Within the velvet complex, controls light-dependent secondary metabolism. Involved in the defense response against Drosophila melanogaster larval grazing. The chain is Secondary metabolism regulator laeA from Emericella nidulans (Aspergillus nidulans).